Reading from the N-terminus, the 141-residue chain is 3-hydroxyacyl-[acyl-carrier-protein] dehydratase FabZ (141 aa).

H48 is an active-site residue.

This sequence belongs to the thioester dehydratase family. FabZ subfamily.

It is found in the cytoplasm. It carries out the reaction a (3R)-hydroxyacyl-[ACP] = a (2E)-enoyl-[ACP] + H2O. Functionally, involved in unsaturated fatty acids biosynthesis. Catalyzes the dehydration of short chain beta-hydroxyacyl-ACPs and long chain saturated and unsaturated beta-hydroxyacyl-ACPs. This chain is 3-hydroxyacyl-[acyl-carrier-protein] dehydratase FabZ, found in Herpetosiphon aurantiacus (strain ATCC 23779 / DSM 785 / 114-95).